Here is a 273-residue protein sequence, read N- to C-terminus: DnaJ homolog subfamily C member 27 (273 aa).

Residues 1–18 are required for interaction with MAPK1; sequence MEANMPKRKEPGRSLRIK. GTP contacts are provided by residues 23–30, 71–75, and 134–137; these read GNAEVGKS, DMAGH, and NKID. Positions 217 to 273 constitute a J domain; it reads DSWDMLGVKPGASRDEVNKAYRKLAVLLHPDKCVAPGSEDAFKAVVNARTALLKNIK.

This sequence belongs to the small GTPase superfamily. Rab family. Interacts directly with MAPK1 (wild-type and kinase-deficient forms). Interacts directly (in GTP-bound form) with MAP2K1 (wild-type and kinase-deficient forms). In terms of tissue distribution, overexpressed in gastrointestinal cancers; expression correlates with later tumor-node-metastasis stages of colorectal cancers.

It localises to the nucleus. Functionally, GTPase which can activate the MEK/ERK pathway and induce cell transformation when overexpressed. May act as a nuclear scaffold for MAPK1, probably by association with MAPK1 nuclear export signal leading to enhanced ERK1/ERK2 signaling. The chain is DnaJ homolog subfamily C member 27 (DNAJC27) from Homo sapiens (Human).